Reading from the N-terminus, the 343-residue chain is Cell cycle control protein 50C (343 aa).

Over 1–34 (MKRKCQDYESRLPDNTAVKQQQLPAFRLQLTASE) the chain is Cytoplasmic. Residues 35 to 55 (ILSGFFAIGLFCLGMGIILLL) traverse the membrane as a helical segment. At 56–306 (SAKSIKEVEI…STLTWSGGSS (251 aa)) the chain is on the extracellular side. Asn66, Asn164, Asn205, and Asn265 each carry an N-linked (GlcNAc...) asparagine glycan. A helical membrane pass occupies residues 307 to 327 (LFLALAYLVTGAVTLLASFSM). Residues 328-343 (MALHLKLKERKTFFLQ) lie on the Cytoplasmic side of the membrane.

It belongs to the CDC50/LEM3 family.

The protein resides in the membrane. The sequence is that of Cell cycle control protein 50C (TMEM30C) from Bos taurus (Bovine).